A 166-amino-acid chain; its full sequence is NAD(P)H-quinone oxidoreductase subunit I, chloroplastic (166 aa).

4Fe-4S ferredoxin-type domains are found at residues 55-84 (GRIHFEFDKCIACEVCVRVCPIDLPVVDWK) and 95-124 (LNYSIDFGICIFCGNCVEYCPTNCLSMTEE). Cysteine 64, cysteine 67, cysteine 70, cysteine 74, cysteine 104, cysteine 107, cysteine 110, and cysteine 114 together coordinate [4Fe-4S] cluster.

Belongs to the complex I 23 kDa subunit family. NDH is composed of at least 16 different subunits, 5 of which are encoded in the nucleus. It depends on [4Fe-4S] cluster as a cofactor.

The protein localises to the plastid. The protein resides in the chloroplast thylakoid membrane. It carries out the reaction a plastoquinone + NADH + (n+1) H(+)(in) = a plastoquinol + NAD(+) + n H(+)(out). It catalyses the reaction a plastoquinone + NADPH + (n+1) H(+)(in) = a plastoquinol + NADP(+) + n H(+)(out). In terms of biological role, NDH shuttles electrons from NAD(P)H:plastoquinone, via FMN and iron-sulfur (Fe-S) centers, to quinones in the photosynthetic chain and possibly in a chloroplast respiratory chain. The immediate electron acceptor for the enzyme in this species is believed to be plastoquinone. Couples the redox reaction to proton translocation, and thus conserves the redox energy in a proton gradient. In Rensonia salvadorica, this protein is NAD(P)H-quinone oxidoreductase subunit I, chloroplastic.